A 348-amino-acid chain; its full sequence is Fructose-1,6-bisphosphatase class 1 (348 aa).

Positions 107, 129, 131, and 132 each coordinate Mg(2+). Substrate contacts are provided by residues 132 to 135, asparagine 224, tyrosine 252, and lysine 282; that span reads DGSS. Glutamate 288 lines the Mg(2+) pocket.

It belongs to the FBPase class 1 family. As to quaternary structure, homotetramer. Requires Mg(2+) as cofactor.

The protein localises to the cytoplasm. The catalysed reaction is beta-D-fructose 1,6-bisphosphate + H2O = beta-D-fructose 6-phosphate + phosphate. Its pathway is carbohydrate biosynthesis; Calvin cycle. The protein is Fructose-1,6-bisphosphatase class 1 of Microcystis aeruginosa (strain NIES-843 / IAM M-2473).